Reading from the N-terminus, the 24-residue chain is Aldehyde dehydrogenase gamma chain (24 aa).

As to quaternary structure, heterotrimer composed of an alpha, a beta and a gamma chain. Requires [2Fe-2S] cluster as cofactor.

The catalysed reaction is an aldehyde + a quinone + H2O = a quinol + a carboxylate + H(+). The chain is Aldehyde dehydrogenase gamma chain from Comamonas testosteroni (Pseudomonas testosteroni).